We begin with the raw amino-acid sequence, 249 residues long: ATP-dependent Clp protease proteolytic subunit (249 aa).

Residue Ser-107 is the Nucleophile of the active site. His-132 is a catalytic residue. The interval Glu-212 to Arg-249 is disordered.

Belongs to the peptidase S14 family. As to quaternary structure, component of the chloroplastic Clp protease core complex.

It localises to the plastid. Its subcellular location is the chloroplast stroma. It catalyses the reaction Hydrolysis of proteins to small peptides in the presence of ATP and magnesium. alpha-casein is the usual test substrate. In the absence of ATP, only oligopeptides shorter than five residues are hydrolyzed (such as succinyl-Leu-Tyr-|-NHMec, and Leu-Tyr-Leu-|-Tyr-Trp, in which cleavage of the -Tyr-|-Leu- and -Tyr-|-Trp bonds also occurs).. Functionally, cleaves peptides in various proteins in a process that requires ATP hydrolysis. Has a chymotrypsin-like activity. Plays a major role in the degradation of misfolded proteins. In Oenothera elata subsp. hookeri (Hooker's evening primrose), this protein is ATP-dependent Clp protease proteolytic subunit.